The primary structure comprises 313 residues: D-alanine--D-alanine ligase (313 aa).

In terms of domain architecture, ATP-grasp spans 104–304 (KQALVPHGIP…YSDLVEAIIA (201 aa)). ATP is bound at residue 130 to 187 (PLPRPYVLKPVNEGSSVGVAIVTAEGNYGSPISAASKGPWQEFDQLLAEPFIRGRELT). Mg(2+)-binding residues include aspartate 255, glutamate 271, and asparagine 273.

Belongs to the D-alanine--D-alanine ligase family. The cofactor is Mg(2+). Requires Mn(2+) as cofactor.

The protein localises to the cytoplasm. The enzyme catalyses 2 D-alanine + ATP = D-alanyl-D-alanine + ADP + phosphate + H(+). It functions in the pathway cell wall biogenesis; peptidoglycan biosynthesis. Functionally, cell wall formation. This chain is D-alanine--D-alanine ligase, found in Novosphingobium aromaticivorans (strain ATCC 700278 / DSM 12444 / CCUG 56034 / CIP 105152 / NBRC 16084 / F199).